The chain runs to 147 residues: Hemoglobin subunit rho (147 aa).

Positions 3–147 constitute a Globin domain; that stretch reads HWSAEEKQLI…VAHALAYKYH (145 aa). Residues His64 and His93 each contribute to the heme b site.

It belongs to the globin family.

The rho chain is the major early embryonic beta-type hemoglobin chain. In Gallus gallus (Chicken), this protein is Hemoglobin subunit rho.